Reading from the N-terminus, the 375-residue chain is 4-hydroxy-3-methylbut-2-en-1-yl diphosphate synthase (flavodoxin) (375 aa).

The [4Fe-4S] cluster site is built by Cys270, Cys273, Cys305, and Glu312.

It belongs to the IspG family. [4Fe-4S] cluster is required as a cofactor.

It catalyses the reaction (2E)-4-hydroxy-3-methylbut-2-enyl diphosphate + oxidized [flavodoxin] + H2O + 2 H(+) = 2-C-methyl-D-erythritol 2,4-cyclic diphosphate + reduced [flavodoxin]. Its pathway is isoprenoid biosynthesis; isopentenyl diphosphate biosynthesis via DXP pathway; isopentenyl diphosphate from 1-deoxy-D-xylulose 5-phosphate: step 5/6. Functionally, converts 2C-methyl-D-erythritol 2,4-cyclodiphosphate (ME-2,4cPP) into 1-hydroxy-2-methyl-2-(E)-butenyl 4-diphosphate. This chain is 4-hydroxy-3-methylbut-2-en-1-yl diphosphate synthase (flavodoxin), found in Yersinia pseudotuberculosis serotype IB (strain PB1/+).